The sequence spans 227 residues: Ubiquitin domain-containing protein 1 (227 aa).

Residues 1–14 are compositionally biased toward basic and acidic residues; the sequence is MGGCVGRERAETRG. The segment at 1–45 is disordered; that stretch reads MGGCVGRERAETRGRGSRTQRKRGGRNEPLKKDKPKWKSDYPMTE. The span at 15–24 shows a compositional bias: basic residues; it reads RGSRTQRKRG. Over residues 25 to 39 the composition is skewed to basic and acidic residues; sequence GRNEPLKKDKPKWKS. One can recognise a Ubiquitin-like domain in the interval 150 to 225; it reads FQLKVRLSTG…IQVIVNQPAP (76 aa).

Its function is as follows. May be involved in the regulation of cellular senescence through a positive feedback loop with TP53. This Danio rerio (Zebrafish) protein is Ubiquitin domain-containing protein 1 (ubtd1).